Consider the following 370-residue polypeptide: Putative agmatine deiminase (370 aa).

Positions 1 to 19 (MTNMNVDATQLTTKPSQDG) are enriched in polar residues. Residues 1–20 (MTNMNVDATQLTTKPSQDGF) are disordered. Catalysis depends on cysteine 361, which acts as the Amidino-cysteine intermediate.

Belongs to the agmatine deiminase family.

The catalysed reaction is agmatine + H2O = N-carbamoylputrescine + NH4(+). This Shewanella frigidimarina (strain NCIMB 400) protein is Putative agmatine deiminase.